Reading from the N-terminus, the 104-residue chain is Cell division topological specificity factor (104 aa).

It belongs to the MinE family.

Prevents the cell division inhibition by proteins MinC and MinD at internal division sites while permitting inhibition at polar sites. This ensures cell division at the proper site by restricting the formation of a division septum at the midpoint of the long axis of the cell. This Sorangium cellulosum (strain So ce56) (Polyangium cellulosum (strain So ce56)) protein is Cell division topological specificity factor.